Reading from the N-terminus, the 148-residue chain is MAHLLLLHGPNLNLLGTREPEVYGRTTLAQIDAALVDRAQAAGHVLHCLQSNAEHVLVERIHAAREDGTAYILINPAAFTHTSVALRDALLGVGLPFVEIHLSNPHAREPFRHHSYLSDKADGVICGFGADSYRLALEAVIARLERDA.

Tyr-23 (proton acceptor) is an active-site residue. Substrate-binding residues include Asn-75, His-81, and Asp-88. Residue His-101 is the Proton donor of the active site. Substrate contacts are provided by residues 102 to 103 (LS) and Arg-112.

The protein belongs to the type-II 3-dehydroquinase family. As to quaternary structure, homododecamer.

The enzyme catalyses 3-dehydroquinate = 3-dehydroshikimate + H2O. It participates in metabolic intermediate biosynthesis; chorismate biosynthesis; chorismate from D-erythrose 4-phosphate and phosphoenolpyruvate: step 3/7. Catalyzes a trans-dehydration via an enolate intermediate. The sequence is that of 3-dehydroquinate dehydratase from Xanthomonas axonopodis pv. citri (strain 306).